We begin with the raw amino-acid sequence, 68 residues long: Disintegrin EMS11A (68 aa).

In terms of domain architecture, Disintegrin spans 1-65 (NSAHPCCDPV…DCPRNRYKGK (65 aa)). 4 cysteine pairs are disulfide-bonded: Cys-6-Cys-29, Cys-20-Cys-26, Cys-25-Cys-50, and Cys-38-Cys-57. The Cell attachment site; atypical (MLD) motif lies at 42-44 (MLD).

The protein belongs to the disintegrin family. Dimeric disintegrin subfamily. In terms of assembly, heterodimer; disulfide-linked. As to expression, expressed by the venom gland.

The protein localises to the secreted. Functionally, poor inhibitor of platelet aggregation. The disintegrin inhibits the adhesion of both the alpha-4/beta-1 (ITGA4/ITGB1) and the alpha-5/beta-1 (ITGA5/ITGB1) integrins to VCAM-1 and fibronectin respectively with almost the same degree of specificity. Inhibition on alpha-IIb/beta-3 (ITGA2B/ITGB3) is low. The protein is Disintegrin EMS11A of Echis multisquamatus (Central Asian sand viper).